Consider the following 224-residue polypeptide: Putative gastrointestinal growth factor xP4 (224 aa).

Residues 1 to 17 (MANSVFWAIAVALVLGA) form the signal peptide. P-type domains lie at 25-68 (YRCG…YTPW), 73-117 (TICN…YQPI), 123-167 (RDCS…FKPE), and 173-216 (LQCA…FYPD). Cystine bridges form between Cys27–Cys53, Cys37–Cys52, Cys47–Cys64, Cys75–Cys102, Cys86–Cys101, Cys96–Cys113, Cys125–Cys152, Cys136–Cys151, Cys146–Cys163, Cys175–Cys201, Cys185–Cys200, and Cys195–Cys212. A glycan (N-linked (GlcNAc...) asparagine) is linked at Asn104.

Post-translationally, glycosylated. As to expression, stomach mucosa.

It localises to the secreted. May act as a growth factor. In Xenopus laevis (African clawed frog), this protein is Putative gastrointestinal growth factor xP4 (p4).